The primary structure comprises 412 residues: MVEQAKLSDPNAEYTMRDLSAETIDITNPRGGVRDAEITDVQTTMVDGNYPWILVRVYTDAGVVGTGEAYWGGGDTAIIERMKPFLVGENPLDIDRLYEHLVQKMSGEGSVSGKVISAISGIEIALHDVAGKLLDVPAYQLVGGKYRDEVRVYCDLHTEDEANPQACAEEGVRVVEELGYDAIKFDLDVPSGHEKDRANRHLRNPEIDHKVEIVEAVTEAVGDRADVAFDCHWSFTGGSAKRLASELEDYDVWWLEDPVPPENHDVQKLVTQSTTTPIAVGENVYRKFGQRTLLEPQAVDIIAPDLPRVGGMRETRKIADLADMYYIPVAMHNVSSPIGTMASAQVAAAIPNSLALEYHSYQLGWWEDLVEEDDLIQNGHMEIPEKPGLGLTLDLDAVEAHMVEGETLFDEE.

Homooctamer.

It catalyses the reaction D-xylonate = 2-dehydro-3-deoxy-D-arabinonate + H2O. Its function is as follows. NADP-dependent D-xylose dehydrogenase involved in the degradation of D-xylose, a major component of hemicelluloses such as xylan. Catalyzes the third reaction in the xylose utilization pathway through dehydratation of D-xylonate into 2-dehydro-3-deoxy-D-xylonate. This is D-xylonate dehydratase from Haloferax volcanii (strain ATCC 29605 / DSM 3757 / JCM 8879 / NBRC 14742 / NCIMB 2012 / VKM B-1768 / DS2) (Halobacterium volcanii).